The chain runs to 403 residues: Enoyl-[acyl-carrier-protein] reductase [NADH] (403 aa).

Residues 49 to 54, 75 to 76, 112 to 113, and 141 to 142 contribute to the NAD(+) site; these read GASSGY, FE, DA, and LA. A substrate-binding site is contributed by Tyr-227. Tyr-237 functions as the Proton donor in the catalytic mechanism. NAD(+)-binding positions include Lys-246 and 276-278; that span reads VVT.

This sequence belongs to the TER reductase family. Monomer.

It carries out the reaction a 2,3-saturated acyl-[ACP] + NAD(+) = a (2E)-enoyl-[ACP] + NADH + H(+). It participates in lipid metabolism; fatty acid biosynthesis. Functionally, involved in the final reduction of the elongation cycle of fatty acid synthesis (FAS II). Catalyzes the reduction of a carbon-carbon double bond in an enoyl moiety that is covalently linked to an acyl carrier protein (ACP). This chain is Enoyl-[acyl-carrier-protein] reductase [NADH], found in Pseudomonas putida (strain ATCC 47054 / DSM 6125 / CFBP 8728 / NCIMB 11950 / KT2440).